The primary structure comprises 272 residues: NH(3)-dependent NAD(+) synthetase (272 aa).

45 to 52 is an ATP binding site; that stretch reads GISGGQDS. A Mg(2+)-binding site is contributed by D51. R138 lines the deamido-NAD(+) pocket. T158 provides a ligand contact to ATP. E163 provides a ligand contact to Mg(2+). Deamido-NAD(+) is bound by residues K171 and D178. Residues K187 and T209 each coordinate ATP. Residue 258 to 259 coordinates deamido-NAD(+); that stretch reads HK.

The protein belongs to the NAD synthetase family. In terms of assembly, homodimer.

It catalyses the reaction deamido-NAD(+) + NH4(+) + ATP = AMP + diphosphate + NAD(+) + H(+). Its pathway is cofactor biosynthesis; NAD(+) biosynthesis; NAD(+) from deamido-NAD(+) (ammonia route): step 1/1. Its function is as follows. Catalyzes the ATP-dependent amidation of deamido-NAD to form NAD. Uses ammonia as a nitrogen source. In Bacillus mycoides (strain KBAB4) (Bacillus weihenstephanensis), this protein is NH(3)-dependent NAD(+) synthetase.